Here is an 88-residue protein sequence, read N- to C-terminus: Elongation factor 1-beta (88 aa).

It belongs to the EF-1-beta/EF-1-delta family.

Its function is as follows. Promotes the exchange of GDP for GTP in EF-1-alpha/GDP, thus allowing the regeneration of EF-1-alpha/GTP that could then be used to form the ternary complex EF-1-alpha/GTP/AAtRNA. The polypeptide is Elongation factor 1-beta (ef1b) (Thermoplasma acidophilum (strain ATCC 25905 / DSM 1728 / JCM 9062 / NBRC 15155 / AMRC-C165)).